A 934-amino-acid chain; its full sequence is Protein unc-45 homolog B (934 aa).

3 TPR repeats span residues 9-42 (SVQL…CKKE), 48-81 (AVIY…DAAD), and 83-115 (KALY…EPKN). ARM repeat units lie at residues 174–213 (DAGA…GMCT), 216–255 (RARA…CVND), and 753–792 (DKLR…NLVC).

As to quaternary structure, interacts with apobec2a, apobec2b, hsp90a.1, hsp90a.2, hsp90ab1 and myosin. In terms of tissue distribution, expressed in striated muscle tissue including somites, heart and craniofacial muscle. Detected in mesoderm adjacent to the dorsal midline during the late gastrula stages and in somitic mesoderm during development of trunk skeletal muscle. Also expressed in cranial skeletal muscle and in cardiac and smooth muscle. Detected in somitic muscle and heart primordium of 24 hour embryos. At later stages, expressed in muscles of pectoral fins, jaw, branchial arches and eye.

It is found in the cytoplasm. Its subcellular location is the myofibril. The protein localises to the sarcomere. The protein resides in the z line. It localises to the a band. It is found in the perinuclear region. In terms of biological role, acts as a co-chaperone for HSP90 and is required for proper folding of the myosin motor domain. Plays a role in sarcomere formation during muscle cell development. Required for myoseptal integrity, myofiber attachment, motility and craniofacial development. Is necessary for normal early lens development. This Danio rerio (Zebrafish) protein is Protein unc-45 homolog B.